The primary structure comprises 102 residues: Protein RnfH (102 aa).

This sequence belongs to the UPF0125 (RnfH) family.

This chain is Protein RnfH, found in Haemophilus influenzae (strain PittEE).